Reading from the N-terminus, the 558-residue chain is Potassium-transporting ATPase potassium-binding subunit (558 aa).

12 consecutive transmembrane segments (helical) span residues 1-21 (MEII…SGYL), 66-86 (FNGF…WLFL), 127-147 (MIVM…VCIA), 166-186 (IVRF…ILLM), 245-265 (IWSD…MLFL), 281-301 (ALIL…LTMW), 327-347 (FGAG…TGSV), 354-374 (LTPL…VFGG), 377-397 (VGLM…SLMV), 416-436 (IVLV…LAFM), 482-502 (ISTG…QLLI), and 531-551 (IVFI…LGPI).

It belongs to the KdpA family. The system is composed of three essential subunits: KdpA, KdpB and KdpC.

It is found in the cell membrane. In terms of biological role, part of the high-affinity ATP-driven potassium transport (or Kdp) system, which catalyzes the hydrolysis of ATP coupled with the electrogenic transport of potassium into the cytoplasm. This subunit binds the extracellular potassium ions and delivers the ions to the membrane domain of KdpB through an intramembrane tunnel. This Staphylococcus aureus (strain bovine RF122 / ET3-1) protein is Potassium-transporting ATPase potassium-binding subunit.